Consider the following 441-residue polypeptide: Amino-acid acetyltransferase (441 aa).

Positions 295-434 (EKVRGAGIDD…KALYNFQRRS (140 aa)) constitute an N-acetyltransferase domain.

This sequence belongs to the acetyltransferase family. ArgA subfamily.

Its subcellular location is the cytoplasm. The enzyme catalyses L-glutamate + acetyl-CoA = N-acetyl-L-glutamate + CoA + H(+). It functions in the pathway amino-acid biosynthesis; L-arginine biosynthesis; N(2)-acetyl-L-ornithine from L-glutamate: step 1/4. This chain is Amino-acid acetyltransferase, found in Photobacterium profundum (strain SS9).